We begin with the raw amino-acid sequence, 128 residues long: NHP2-like protein 1 (128 aa).

Residues 36–48 (RKGANEATKTLNR) form an interaction with U4 snRNA and U4atac snRNA region. The tract at residues 96-128 (SRPVIACAVTIKEGSQLKPQIQSLQQSIERLLV) is important for U4 snRNA-binding.

The protein belongs to the eukaryotic ribosomal protein eL8 family. As to quaternary structure, identified in the spliceosome B complex. Component of the U4/U6-U5 tri-snRNP complex. Part of the small subunit (SSU) processome, composed of more than 70 proteins and the RNA chaperone small nucleolar RNA (snoRNA) U3.

The protein resides in the nucleus. It localises to the nucleolus. Its function is as follows. Part of the small subunit (SSU) processome, first precursor of the small eukaryotic ribosomal subunit. During the assembly of the SSU processome in the nucleolus, many ribosome biogenesis factors, an RNA chaperone and ribosomal proteins associate with the nascent pre-rRNA and work in concert to generate RNA folding, modifications, rearrangements and cleavage as well as targeted degradation of pre-ribosomal RNA by the RNA exosome. Involved in pre-mRNA splicing as component of the spliceosome. Binds to the 5'-stem-loop of U4 snRNA and thereby contributes to spliceosome assembly. The protein undergoes a conformational change upon RNA-binding. Core component of box C/D small nucleolar ribonucleoprotein (snoRNP) complexes that function in methylation of multiple sites on ribosomal RNAs (rRNAs) and messenger RNAs (mRNAs). In Xenopus tropicalis (Western clawed frog), this protein is NHP2-like protein 1.